Consider the following 352-residue polypeptide: Molybdenum import ATP-binding protein ModC (352 aa).

Positions 1–229 (MLELNFSQTL…SVMNPWLPKE (229 aa)) constitute an ABC transporter domain. 31–38 (GVSGAGKT) contributes to the ATP binding site. A Mop domain is found at 289–352 (QTSIRNVLRA…AQIKSVSITA (64 aa)).

This sequence belongs to the ABC transporter superfamily. Molybdate importer (TC 3.A.1.8) family. As to quaternary structure, the complex is composed of two ATP-binding proteins (ModC), two transmembrane proteins (ModB) and a solute-binding protein (ModA).

It localises to the cell inner membrane. The enzyme catalyses molybdate(out) + ATP + H2O = molybdate(in) + ADP + phosphate + H(+). In terms of biological role, part of the ABC transporter complex ModABC involved in molybdenum import. Responsible for energy coupling to the transport system. This chain is Molybdenum import ATP-binding protein ModC, found in Shigella dysenteriae serotype 1 (strain Sd197).